The sequence spans 136 residues: DNA-directed RNA polymerase subunit omega (136 aa).

The segment at 79–107 is disordered; the sequence is EPEAETVPLLSSSPAAAAVAPQSSSDDAA. Residues 89–107 show a composition bias toward low complexity; it reads SSSPAAAAVAPQSSSDDAA.

This sequence belongs to the RNA polymerase subunit omega family. As to quaternary structure, the RNAP catalytic core consists of 2 alpha, 1 beta, 1 beta' and 1 omega subunit. When a sigma factor is associated with the core the holoenzyme is formed, which can initiate transcription.

It catalyses the reaction RNA(n) + a ribonucleoside 5'-triphosphate = RNA(n+1) + diphosphate. In terms of biological role, promotes RNA polymerase assembly. Latches the N- and C-terminal regions of the beta' subunit thereby facilitating its interaction with the beta and alpha subunits. The protein is DNA-directed RNA polymerase subunit omega of Methylobacterium radiotolerans (strain ATCC 27329 / DSM 1819 / JCM 2831 / NBRC 15690 / NCIMB 10815 / 0-1).